A 941-amino-acid polypeptide reads, in one-letter code: ATP-dependent 6-phosphofructokinase subunit beta (941 aa).

The interval 2 to 558 is N-terminal catalytic PFK domain 1; it reads PDASLFNGTS…HMKNFISTNS (557 aa). ATP-binding positions include glycine 191, 255–256, and 285–288; these read RC and GDGS. A Mg(2+)-binding site is contributed by aspartate 286. Beta-D-fructose 6-phosphate is bound by residues 331 to 333, arginine 368, 375 to 377, glutamate 432, arginine 460, and 466 to 469; these read SID, MGR, and HVQR. The Proton acceptor role is filled by aspartate 333. The tract at residues 559–572 is interdomain linker; that stretch reads ADHVPPSLPLEKRK. The C-terminal regulatory PFK domain 2 stretch occupies residues 573 to 941; it reads KVAIINVGAP…SDMLSGRTSL (369 aa). Residues arginine 643, 701-705, arginine 739, 746-748, glutamate 806, lysine 832, 838-841, and arginine 918 contribute to the beta-D-fructose 2,6-bisphosphate site; these read TISNN, QGG, and HVQQ.

This sequence belongs to the phosphofructokinase type A (PFKA) family. ATP-dependent PFK group I subfamily. Eukaryotic two domain clade 'E' sub-subfamily. As to quaternary structure, heterododecamer of 4 alpha, 4 beta and 4 gamma chains. The gamma chain bridges the N-terminal halves of the alpha and beta subunits. It depends on Mg(2+) as a cofactor.

It is found in the cytoplasm. The enzyme catalyses beta-D-fructose 6-phosphate + ATP = beta-D-fructose 1,6-bisphosphate + ADP + H(+). Its pathway is carbohydrate degradation; glycolysis; D-glyceraldehyde 3-phosphate and glycerone phosphate from D-glucose: step 3/4. Its activity is regulated as follows. Allosterically activated by ADP, AMP, or fructose 2,6-bisphosphate, and allosterically inhibited by ATP or citrate. Functionally, catalyzes the phosphorylation of D-fructose 6-phosphate to fructose 1,6-bisphosphate by ATP, the first committing step of glycolysis. The chain is ATP-dependent 6-phosphofructokinase subunit beta (PFK2) from Komagataella phaffii (strain GS115 / ATCC 20864) (Yeast).